The primary structure comprises 571 residues: Urease subunit alpha (571 aa).

One can recognise a Urease domain in the interval 129 to 571; sequence GGIDSHIHFI…LPMAQRYFLF (443 aa). Ni(2+)-binding residues include His-134, His-136, and Lys-217. Residue Lys-217 is modified to N6-carboxylysine. His-219 is a substrate binding site. Ni(2+) contacts are provided by His-246 and His-272. The Proton donor role is filled by His-320. A Ni(2+)-binding site is contributed by Asp-360.

It belongs to the metallo-dependent hydrolases superfamily. Urease alpha subunit family. Heterotrimer of UreA (gamma), UreB (beta) and UreC (alpha) subunits. Three heterotrimers associate to form the active enzyme. Requires Ni cation as cofactor. Carboxylation allows a single lysine to coordinate two nickel ions.

The protein resides in the cytoplasm. It carries out the reaction urea + 2 H2O + H(+) = hydrogencarbonate + 2 NH4(+). It functions in the pathway nitrogen metabolism; urea degradation; CO(2) and NH(3) from urea (urease route): step 1/1. This Cupriavidus necator (strain ATCC 17699 / DSM 428 / KCTC 22496 / NCIMB 10442 / H16 / Stanier 337) (Ralstonia eutropha) protein is Urease subunit alpha.